The chain runs to 588 residues: Probable metalloprotease ARX1 (588 aa).

Belongs to the peptidase M24 family. Component of the nucleoplasmic and cytoplasmic pre-60S ribosomal particles.

Its subcellular location is the cytoplasm. It localises to the nucleus. In terms of biological role, probable metalloprotease involved in proper assembly of pre-ribosomal particles during the biogenesis of the 60S ribosomal subunit. Accompanies the pre-60S particles to the cytoplasm. The protein is Probable metalloprotease ARX1 (ARX1) of Candida glabrata (strain ATCC 2001 / BCRC 20586 / JCM 3761 / NBRC 0622 / NRRL Y-65 / CBS 138) (Yeast).